The chain runs to 230 residues: Acyl-protein thioesterase 1 (230 aa).

Residues S119, D174, and H208 each act as charge relay system in the active site. Position 224 is an N6-acetyllysine (K224).

This sequence belongs to the AB hydrolase superfamily. AB hydrolase 2 family. Homodimer. As to expression, platelets.

The protein localises to the cytoplasm. It is found in the cell membrane. The protein resides in the nucleus membrane. Its subcellular location is the endoplasmic reticulum. The catalysed reaction is S-hexadecanoyl-L-cysteinyl-[protein] + H2O = L-cysteinyl-[protein] + hexadecanoate + H(+). It carries out the reaction 1-hexadecanoyl-sn-glycero-3-phosphocholine + H2O = sn-glycerol 3-phosphocholine + hexadecanoate + H(+). It catalyses the reaction a 1-(9Z-octadecenoyl)-2-acyl-sn-glycero-3-phosphocholine + H2O = a 2-acyl-sn-glycero-3-phosphocholine + (9Z)-octadecenoate + H(+). With respect to regulation, inhibited by palmostatin-B, leading to impair depalmitoylating of Ras. In terms of biological role, acts as an acyl-protein thioesterase. Hydrolyzes fatty acids from S-acylated cysteine residues in proteins such as trimeric G alpha proteins or HRAS. Acts as a palmitoyl thioesterase that catalyzes depalmitoylation of proteins, such as ADRB2, KCNMA1 and SQSTM1. Acts as a negative regulator of autophagy by mediating palmitoylation of SQSTM1, decreasing affinity between SQSTM1 and ATG8 proteins and recruitment of ubiquitinated cargo proteins to autophagosomes. Acts as a lysophospholipase and hydrolyzes lysophosphatidylcholine (lyso-PC). Also hydrolyzes lysophosphatidylethanolamine (lyso-PE), lysophosphatidylinositol (lyso-PI) and lysophosphatidylserine (lyso-PS). Has much higher thioesterase activity than lysophospholipase activity. Contributes to the production of lysophosphatidic acid (LPA) during blood coagulation by recognizing and cleaving plasma phospholipids to generate lysophospholipids which in turn act as substrates for ENPP2 to produce LPA. This chain is Acyl-protein thioesterase 1 (LYPLA1), found in Homo sapiens (Human).